Reading from the N-terminus, the 649-residue chain is Solute carrier family 22 member 17 (649 aa).

Residues 1–70 (MAPRVATGTP…GGDGLGSSLS (70 aa)) are disordered. The segment covering 24–34 (VEITPTSNGQV) has biased composition (polar residues). Residues 47-57 (QGEREREREGE) show a composition bias toward basic and acidic residues. Residues Asn-134 and Asn-143 are each glycosylated (N-linked (GlcNAc...) asparagine). Transmembrane regions (helical) follow at residues 211 to 231 (VILE…FLGY), 240 to 260 (GIVL…AAAG), 265 to 285 (VMAL…GVYL), 300 to 320 (ALAG…LALV), 330 to 350 (MITA…FLES), 414 to 433 (NIWK…HAIR), 448 to 468 (FYLC…FLGV), 477 to 497 (GILL…LGLW), 526 to 546 (FSVL…LLAA), 557 to 577 (GLGL…AQRL), and 584 to 604 (FLQH…IMLL).

This sequence belongs to the major facilitator (TC 2.A.1) superfamily. Organic cation transporter (TC 2.A.1.19) family. Expressed in brain.

Its subcellular location is the cell membrane. It localises to the vacuole membrane. In terms of biological role, cell surface receptor for LCN2 (24p3) that plays a key role in iron homeostasis and transport. Able to bind iron-bound LCN2 (holo-24p3), followed by internalization of holo-24p3 and release of iron, thereby increasing intracellular iron concentration and leading to inhibition of apoptosis. Also binds iron-free LCN2 (apo-24p3), followed by internalization of apo-24p3 and its association with an intracellular siderophore, leading to iron chelation and iron transfer to the extracellular medium, thereby reducing intracellular iron concentration and resulting in apoptosis. This is Solute carrier family 22 member 17 (SLC22A17) from Homo sapiens (Human).